Here is a 449-residue protein sequence, read N- to C-terminus: MGKLFGTDGVRGVANKELTCELAFDLGRAGAYVLTETKQKPKILIGKDTRISCDMLEAALCAGLTSVGADVYLAGVITTPAIAHLVKSHGFDAGIMISASHNPYEFNGIKFFNSQGFKLSDQIEEKIEDIILNKKWDEVPHAQFDAIGRINRVELKKDYQEYLKSTLNAASFKGFKIVIDCANGAASAIAPEVFEDLGAEVVVINNQPDGTNINKNCGSTHLQALQEEVVKNKADFGIAYDGDADRTLFVDEEGNTVDGDKIMLLLAQNLKQQGRLKRNTLVVTVMSNMGLFVAAKELGINLEVTKVGDRYVLEKLLEGGYSIGGEQSGHIILLDYATTGDGILTSLQLTKLIRESGKKLSELGKIMKVYPQVLVNAKVENGKKDLYSKDPVILEAIKKVEEKLNGKGRVLIRPSGTEPLIRVMIEGEDYEEIKKDADNLASLIESRLS.

Ser100 functions as the Phosphoserine intermediate in the catalytic mechanism. Ser100, Asp241, Asp243, and Asp245 together coordinate Mg(2+). A Phosphoserine modification is found at Ser100.

It belongs to the phosphohexose mutase family. Mg(2+) serves as cofactor. Activated by phosphorylation.

The enzyme catalyses alpha-D-glucosamine 1-phosphate = D-glucosamine 6-phosphate. In terms of biological role, catalyzes the conversion of glucosamine-6-phosphate to glucosamine-1-phosphate. This is Phosphoglucosamine mutase from Caldicellulosiruptor saccharolyticus (strain ATCC 43494 / DSM 8903 / Tp8T 6331).